The primary structure comprises 33 residues: Mu/delta-theraphotoxin-Pm2a (33 aa).

3 disulfides stabilise this stretch: Cys-2–Cys-16, Cys-9–Cys-21, and Cys-15–Cys-27. Residue Phe-33 is modified to Phenylalanine amide.

As to expression, expressed by the venom gland.

It is found in the secreted. Gating-modifier toxin with very weak activity on Nav1.7/SCN9A and Nav1.8/SCN10A. Shows 22% peak current inhibition (at 10 uM) on Nav1.8/SCN10A sodium channels. Show peak current inhibition and delays fast inactivation on Nav1.7/SCN9A (EC(50)&gt;10 uM). The polypeptide is Mu/delta-theraphotoxin-Pm2a (Poecilotheria metallica (Metallic blue ornamental tree spider)).